The chain runs to 471 residues: Cleavage and polyadenylation specificity factor subunit 7 (471 aa).

Residues Val34–Pro68 are disordered. Over residues Glu50–Lys62 the composition is skewed to pro residues. In terms of domain architecture, RRM spans Ala82–Arg162. Residues Glu176–Ser220 form a disordered region. Positions His190–Asp199 are enriched in basic and acidic residues. The residue at position 203 (Thr203) is a Phosphothreonine. Ser205 carries the phosphoserine modification. Residue Lys354 forms a Glycyl lysine isopeptide (Lys-Gly) (interchain with G-Cter in SUMO2) linkage. Residues Ser409–His471 form a disordered region. Ser413 and Ser423 each carry phosphoserine. Positions Arg418–Arg469 are arg/Ser-rich domain. Composition is skewed to basic and acidic residues over residues Glu425–Ser434 and Leu441–His471.

This sequence belongs to the RRM CPSF6/7 family. In terms of assembly, component of the cleavage factor Im (CFIm) complex which is a heterotetramer composed of two subunits of NUDT21/CPSF5 and two subunits of CPSF6 or CPSF7 or a heterodimer of CPSF6 and CPSF7. The cleavage factor Im (CFIm) complex associates with the CPSF and CSTF complexes to promote the assembly of the core mRNA 3'-processing machinery. Interacts with NUDT21/CPSF5. Interacts (via Arg/Ser-rich domain) with FIP1L1 (preferentially via unphosphorylated form and Arg/Glu/Asp-rich region); this interaction mediates, at least in part, the interaction between the CFIm and CPSF complexes and may be inhibited by CPSF7 hyper-phosphorylation. In terms of processing, phosphorylated. Asymmetrically dimethylated on arginine residues by PRMT1.

It is found in the nucleus. The protein localises to the cytoplasm. Functionally, component of the cleavage factor Im (CFIm) complex that functions as an activator of the pre-mRNA 3'-end cleavage and polyadenylation processing required for the maturation of pre-mRNA into functional mRNAs. CFIm contributes to the recruitment of multiprotein complexes on specific sequences on the pre-mRNA 3'-end, so called cleavage and polyadenylation signals (pA signals). Most pre-mRNAs contain multiple pA signals, resulting in alternative cleavage and polyadenylation (APA) producing mRNAs with variable 3'-end formation. The CFIm complex acts as a key regulator of cleavage and polyadenylation site choice during APA through its binding to 5'-UGUA-3' elements localized in the 3'-untranslated region (UTR) for a huge number of pre-mRNAs. CPSF7 activates directly the mRNA 3'-processing machinery. Binds to pA signals in RNA substrates. This chain is Cleavage and polyadenylation specificity factor subunit 7, found in Mus musculus (Mouse).